The chain runs to 214 residues: Thymidylate kinase (214 aa).

10-17 serves as a coordination point for ATP; sequence GGEGAGKS.

The protein belongs to the thymidylate kinase family.

It carries out the reaction dTMP + ATP = dTDP + ADP. Functionally, phosphorylation of dTMP to form dTDP in both de novo and salvage pathways of dTTP synthesis. The chain is Thymidylate kinase from Brucella canis (strain ATCC 23365 / NCTC 10854 / RM-666).